A 1166-amino-acid polypeptide reads, in one-letter code: Serine-aspartate repeat-containing protein E (1166 aa).

Residues 1 to 52 form the signal peptide; it reads MINRDNKKAITKKGMISNRLNKFSIRKYTVGTASILVGTTLIFGLGNQEAKA. The YSIRK-G/S signaling motif signature appears at 23 to 34; it reads FSIRKYTVGTAS. Residues 53-606 are ligand binding A region; it reads AENTSTENAK…GDGTVKPEEK (554 aa). The tract at residues 54 to 230 is disordered; it reads ENTSTENAKQ…SKEELKNNPE (177 aa). Positions 61 to 75 are enriched in basic and acidic residues; the sequence is AKQDDATTSDNKEVV. The span at 77–90 shows a compositional bias: low complexity; the sequence is ETENNSTTENNSTN. Residues 92–108 are compositionally biased toward basic and acidic residues; sequence IKKETNTDSQPEAKKES. Over residues 118 to 129 the composition is skewed to polar residues; it reads NNVTATTETKPQ. Positions 130–145 are enriched in basic and acidic residues; it reads NIEKENVKPSTDKTAT. Positions 166-178 are enriched in low complexity; that stretch reads TTKPSTSEPSTSE. The span at 179-212 shows a compositional bias: polar residues; that stretch reads IQTKPTTPQESTNIENSQPQPTPSKVDNQVTDAT. The span at 221 to 230 shows a compositional bias: basic and acidic residues; it reads SKEELKNNPE. 3 consecutive CNA-B domains span residues 607-719, 720-829, and 830-940; these read LYKI…YKEP, KYNL…YKTP, and KYSL…EEDT. A disordered region spans residues 904 to 1141; sequence VTNTTEDDKD…TGSENNGSNN (238 aa). Composition is skewed to acidic residues over residues 908 to 918 and 935 to 1105; these read TEDDKDADGGE and YFEE…DSDS. Residues 1129–1133 carry the LPXTG sorting signal motif; sequence LPETG. The residue at position 1132 (Thr-1132) is a Pentaglycyl murein peptidoglycan amidated threonine. The propeptide at 1133-1166 is removed by sortase; it reads GSENNGSNNATLFGGLFAALGSLLLFGRRKKQNK.

This sequence belongs to the serine-aspartate repeat-containing protein (SDr) family. Interacts with host complement factor H/CFAH (via C-terminus). Interacts with host complement regulator C4BPA.

Its subcellular location is the secreted. It localises to the cell wall. Its function is as follows. Cell surface-associated calcium-binding protein which plays an important role in adhesion and pathogenesis. Contributes to the resistance to killing by innate immune components in blood and thus attenuates bacterial clearance by interacting with host complement factor H/CFAH and modulating its activity. Inhibits also bacterial opsonization and killing by interacting with host complement regulator C4BPA and thus inhibiting classical complement pathway activation. The chain is Serine-aspartate repeat-containing protein E (sdrE) from Staphylococcus aureus (strain Newman).